The chain runs to 216 residues: Somatotropin (216 aa).

An N-terminal signal peptide occupies residues 1–26 (MAAGPRTSMLLAFALLCLPWTQEVGA). H45 provides a ligand contact to Zn(2+). An intrachain disulfide couples C78 to C189. Position 131 is a phosphoserine (S131). E198 contacts Zn(2+). A disulfide bridge links C206 with C214.

This sequence belongs to the somatotropin/prolactin family.

Its subcellular location is the secreted. Its function is as follows. Plays an important role in growth control. Its major role in stimulating body growth is to stimulate the liver and other tissues to secrete IGF1. It stimulates both the differentiation and proliferation of myoblasts. It also stimulates amino acid uptake and protein synthesis in muscle and other tissues. This is Somatotropin (GH1) from Balaenoptera physalus (Fin whale).